The sequence spans 175 residues: Gamma-crystallin-1 (175 aa).

Beta/gamma crystallin 'Greek key' domains follow at residues 2 to 40 (GKIFFYEERNFQGRHYECGSDYSDLSSYFNRCNSIRVEG) and 41 to 83 (GNWI…RFLP). The tract at residues 84-88 (NYQGQ) is connecting peptide. Beta/gamma crystallin 'Greek key' domains follow at residues 89 to 129 (YKMR…NVFD) and 130 to 172 (GHWM…RRVY).

It belongs to the beta/gamma-crystallin family. Monomer.

In terms of biological role, crystallins are the dominant structural components of the vertebrate eye lens. The protein is Gamma-crystallin-1 (cryg1) of Xenopus laevis (African clawed frog).